We begin with the raw amino-acid sequence, 747 residues long: Sex-specific storage-protein 1 (747 aa).

The N-terminal stretch at 1–15 is a signal peptide; that stretch reads MRVLVLLACLAAASA. Residues Asn494 and Asn706 are each glycosylated (N-linked (GlcNAc...) asparagine).

Belongs to the hemocyanin family. Fat body.

The protein resides in the secreted. The protein localises to the extracellular space. Functionally, larval storage protein (LSP) which may serve as a store of amino acids for synthesis of adult proteins. This is Sex-specific storage-protein 1 (SP1) from Bombyx mori (Silk moth).